The sequence spans 20 residues: GMP synthase [glutamine-hydrolyzing] (20 aa).

The region spanning Ala1–Ala20 is the GMPS ATP-PPase domain.

In terms of assembly, homodimer.

It carries out the reaction XMP + L-glutamine + ATP + H2O = GMP + L-glutamate + AMP + diphosphate + 2 H(+). Its pathway is purine metabolism; GMP biosynthesis; GMP from XMP (L-Gln route): step 1/1. In terms of biological role, catalyzes the synthesis of GMP from XMP. This is GMP synthase [glutamine-hydrolyzing] (guaA) from Fructilactobacillus sanfranciscensis (Lactobacillus sanfranciscensis).